Consider the following 341-residue polypeptide: Phosphate acyltransferase (341 aa).

Belongs to the PlsX family. In terms of assembly, homodimer. Probably interacts with PlsY.

It is found in the cytoplasm. It carries out the reaction a fatty acyl-[ACP] + phosphate = an acyl phosphate + holo-[ACP]. Its pathway is lipid metabolism; phospholipid metabolism. Functionally, catalyzes the reversible formation of acyl-phosphate (acyl-PO(4)) from acyl-[acyl-carrier-protein] (acyl-ACP). This enzyme utilizes acyl-ACP as fatty acyl donor, but not acyl-CoA. The chain is Phosphate acyltransferase from Vibrio parahaemolyticus serotype O3:K6 (strain RIMD 2210633).